A 384-amino-acid chain; its full sequence is 8-amino-7-oxononanoate synthase (384 aa).

Residue R21 coordinates substrate. Residue 108–109 (GF) participates in pyridoxal 5'-phosphate binding. H133 is a substrate binding site. Residues S179, H207, and T233 each contribute to the pyridoxal 5'-phosphate site. K236 carries the N6-(pyridoxal phosphate)lysine modification. Substrate is bound at residue T352.

The protein belongs to the class-II pyridoxal-phosphate-dependent aminotransferase family. BioF subfamily. As to quaternary structure, homodimer. Pyridoxal 5'-phosphate serves as cofactor.

The catalysed reaction is 6-carboxyhexanoyl-[ACP] + L-alanine + H(+) = (8S)-8-amino-7-oxononanoate + holo-[ACP] + CO2. The protein operates within cofactor biosynthesis; biotin biosynthesis. In terms of biological role, catalyzes the decarboxylative condensation of pimeloyl-[acyl-carrier protein] and L-alanine to produce 8-amino-7-oxononanoate (AON), [acyl-carrier protein], and carbon dioxide. The polypeptide is 8-amino-7-oxononanoate synthase (Shigella flexneri serotype 5b (strain 8401)).